The sequence spans 289 residues: Cell division protein ZipA (289 aa).

Position 1 (M1) is a topological domain, periplasmic. A helical membrane pass occupies residues 2-22 (EIGLREWLIVIGIIVIAGILF). Topologically, residues 23–289 (DGWRRMRGSK…ERRALTQRRG (267 aa)) are cytoplasmic. The disordered stretch occupies residues 48-141 (DEEETTSAEV…KPAQRITEDK (94 aa)). Composition is skewed to basic and acidic residues over residues 64–77 (LDTHKEPQLDEHDL), 85–106 (REGKRSNSDKRGNSDKKRKDEP), and 123–141 (GRDDDFPDDKPAQRITEDK).

The protein belongs to the ZipA family. In terms of assembly, interacts with FtsZ via their C-terminal domains.

It is found in the cell inner membrane. Essential cell division protein that stabilizes the FtsZ protofilaments by cross-linking them and that serves as a cytoplasmic membrane anchor for the Z ring. Also required for the recruitment to the septal ring of downstream cell division proteins. This is Cell division protein ZipA from Pseudomonas savastanoi pv. phaseolicola (strain 1448A / Race 6) (Pseudomonas syringae pv. phaseolicola (strain 1448A / Race 6)).